A 532-amino-acid chain; its full sequence is CTP synthase (532 aa).

An amidoligase domain region spans residues 1 to 269 (MNQASTRFIF…DTQILNHFNI (269 aa)). Ser-17 contributes to the CTP binding site. Ser-17 contacts UTP. ATP is bound by residues 18-23 (SLGKGL) and Asp-75. The Mg(2+) site is built by Asp-75 and Glu-143. CTP-binding positions include 150-152 (DIE), 190-195 (KTKPTQ), and Lys-226. Residues 190–195 (KTKPTQ) and Lys-226 each bind UTP. The region spanning 294–532 (NVAIIGKYIK…FISFIKASLD (239 aa)) is the Glutamine amidotransferase type-1 domain. Residue Gly-355 coordinates L-glutamine. Cys-382 (nucleophile; for glutamine hydrolysis) is an active-site residue. L-glutamine-binding positions include 383–386 (MGMQ), Glu-406, and Arg-462. Catalysis depends on residues His-509 and Glu-511.

This sequence belongs to the CTP synthase family. Homotetramer.

It carries out the reaction UTP + L-glutamine + ATP + H2O = CTP + L-glutamate + ADP + phosphate + 2 H(+). It catalyses the reaction L-glutamine + H2O = L-glutamate + NH4(+). The catalysed reaction is UTP + NH4(+) + ATP = CTP + ADP + phosphate + 2 H(+). It functions in the pathway pyrimidine metabolism; CTP biosynthesis via de novo pathway; CTP from UDP: step 2/2. Its activity is regulated as follows. Allosterically activated by GTP, when glutamine is the substrate; GTP has no effect on the reaction when ammonia is the substrate. The allosteric effector GTP functions by stabilizing the protein conformation that binds the tetrahedral intermediate(s) formed during glutamine hydrolysis. Inhibited by the product CTP, via allosteric rather than competitive inhibition. Catalyzes the ATP-dependent amination of UTP to CTP with either L-glutamine or ammonia as the source of nitrogen. Regulates intracellular CTP levels through interactions with the four ribonucleotide triphosphates. This Ehrlichia chaffeensis (strain ATCC CRL-10679 / Arkansas) protein is CTP synthase.